We begin with the raw amino-acid sequence, 555 residues long: uncharacterized protein (555 aa).

An N-terminal signal peptide occupies residues 1–28 (MRSGLFGVLRWTAVGLVATLVASLALTA). Residue Cys29 is the site of N-palmitoyl cysteine attachment. The S-diacylglycerol cysteine moiety is linked to residue Cys29.

It to M.tuberculosis Rv2585c and M.bovis Mb2616c.

Its subcellular location is the cell membrane. This is an uncharacterized protein from Mycobacterium leprae (strain TN).